The chain runs to 185 residues: Ribosome-recycling factor (185 aa).

It belongs to the RRF family.

It localises to the cytoplasm. Functionally, responsible for the release of ribosomes from messenger RNA at the termination of protein biosynthesis. May increase the efficiency of translation by recycling ribosomes from one round of translation to another. The sequence is that of Ribosome-recycling factor from Shewanella baltica (strain OS223).